The following is a 31-amino-acid chain: Cycloviolacin-O14 (31 aa).

Residues 1–31 (GSIPACGESCFKGKCYTPGCSCSKYPLCAKN) constitute a cross-link (cyclopeptide (Gly-Asn)). 3 disulfide bridges follow: C6-C20, C10-C22, and C15-C28.

Post-translationally, this is a cyclic peptide. As to expression, expressed in leaves and petioles but not in petals, roots and runners (at protein level).

In terms of biological role, probably participates in a plant defense mechanism. Has hemolytic activity. This Viola odorata (Sweet violet) protein is Cycloviolacin-O14.